A 418-amino-acid polypeptide reads, in one-letter code: Alditol oxidase (418 aa).

In terms of domain architecture, FAD-binding PCMH-type spans 13-179; that stretch reads ITYTAKELLR…TSLTLDLEPA (167 aa). FAD is bound by residues 41 to 47, Ser106, Ser111, Gly114, 118 to 121, and Val169; these read VLGSGHS and TGTH. A Pros-8alpha-FAD histidine modification is found at His46. A D-sorbitol-binding site is contributed by Ser106. Ser106 is a xylitol binding site. D-sorbitol-binding residues include Glu320, Arg322, and Thr345. 3 residues coordinate xylitol: Glu320, Arg322, and Thr345. Arg322 lines the FAD pocket. Residue His372 participates in FAD binding. Lys375 is a binding site for D-sorbitol. Lys375 contributes to the xylitol binding site.

It belongs to the oxygen-dependent FAD-linked oxidoreductase family. In terms of assembly, monomer. The cofactor is FAD.

The catalysed reaction is an alditol + O2 = an aldose + H2O2. The enzyme catalyses xylitol + O2 = D-xylose + H2O2. It carries out the reaction D-sorbitol + O2 = D-glucose + H2O2. Oxidase that performs selective oxidation of the terminal primary hydroxyl group of several alditols, with a reduction of O2 to H2O2. Shows highest activity on xylitol and D-sorbitol, and a poor efficiency with D-mannitol and L-threitol. The chain is Alditol oxidase (xyoA) from Streptomyces coelicolor (strain ATCC BAA-471 / A3(2) / M145).